A 278-amino-acid chain; its full sequence is 4-deoxy-L-threo-5-hexosulose-uronate ketol-isomerase (278 aa).

4 residues coordinate Zn(2+): H196, H198, E203, and H245.

It belongs to the KduI family. In terms of assembly, homohexamer. Requires Zn(2+) as cofactor.

The enzyme catalyses 5-dehydro-4-deoxy-D-glucuronate = 3-deoxy-D-glycero-2,5-hexodiulosonate. It functions in the pathway glycan metabolism; pectin degradation; 2-dehydro-3-deoxy-D-gluconate from pectin: step 4/5. In terms of biological role, catalyzes the isomerization of 5-dehydro-4-deoxy-D-glucuronate to 3-deoxy-D-glycero-2,5-hexodiulosonate. This Escherichia coli (strain K12 / MC4100 / BW2952) protein is 4-deoxy-L-threo-5-hexosulose-uronate ketol-isomerase.